A 461-amino-acid chain; its full sequence is Chromosomal replication initiator protein DnaA (461 aa).

The interval methionine 1–threonine 83 is domain I, interacts with DnaA modulators. Residues threonine 83–threonine 124 form a domain II region. Positions asparagine 125–alanine 341 are domain III, AAA+ region. ATP-binding residues include glycine 169, glycine 171, lysine 172, and threonine 173. The segment at asparagine 342–serine 461 is domain IV, binds dsDNA.

It belongs to the DnaA family. In terms of assembly, oligomerizes as a right-handed, spiral filament on DNA at oriC.

It is found in the cytoplasm. In terms of biological role, plays an essential role in the initiation and regulation of chromosomal replication. ATP-DnaA binds to the origin of replication (oriC) to initiate formation of the DNA replication initiation complex once per cell cycle. Binds the DnaA box (a 9 base pair repeat at the origin) and separates the double-stranded (ds)DNA. Forms a right-handed helical filament on oriC DNA; dsDNA binds to the exterior of the filament while single-stranded (ss)DNA is stabiized in the filament's interior. The ATP-DnaA-oriC complex binds and stabilizes one strand of the AT-rich DNA unwinding element (DUE), permitting loading of DNA polymerase. After initiation quickly degrades to an ADP-DnaA complex that is not apt for DNA replication. Binds acidic phospholipids. The protein is Chromosomal replication initiator protein DnaA of Colwellia psychrerythraea (strain 34H / ATCC BAA-681) (Vibrio psychroerythus).